The chain runs to 170 residues: RNA pyrophosphohydrolase (170 aa).

Residues 9–162 (PYRPCAGIMV…KRAVYEKVVA (154 aa)) enclose the Nudix hydrolase domain. A Nudix box motif is present at residues 50 to 71 (GGIDDGERPLTAAIRELYEETG).

This sequence belongs to the Nudix hydrolase family. RppH subfamily. Requires a divalent metal cation as cofactor.

In terms of biological role, accelerates the degradation of transcripts by removing pyrophosphate from the 5'-end of triphosphorylated RNA, leading to a more labile monophosphorylated state that can stimulate subsequent ribonuclease cleavage. The protein is RNA pyrophosphohydrolase of Agrobacterium fabrum (strain C58 / ATCC 33970) (Agrobacterium tumefaciens (strain C58)).